A 179-amino-acid polypeptide reads, in one-letter code: UPF0302 protein YpiB (179 aa).

Belongs to the UPF0302 family.

This is UPF0302 protein YpiB (ypiB) from Bacillus subtilis (strain 168).